The primary structure comprises 239 residues: ATP synthase subunit a (239 aa).

The next 6 membrane-spanning stretches (helical) occupy residues 31–51 (FLLQPHVTYTWVVMLVLLGLG), 91–111 (VFPLIASLGMFILFSNYLGMI), 125–145 (AACALISVVFTHVIGIKFHGV), 151–171 (FMGPVWWLTPLIMPIEIIGHI), 194–214 (ILFFLAGFYLAPLPMMFLGLF), and 215–235 (TGFIQAFIFCLLSMMYFAGAI).

The protein belongs to the ATPase A chain family. In terms of assembly, F-type ATPases have 2 components, CF(1) - the catalytic core - and CF(0) - the membrane proton channel. CF(1) has five subunits: alpha(3), beta(3), gamma(1), delta(1), epsilon(1). CF(0) has three main subunits: a(1), b(2) and c(9-12). The alpha and beta chains form an alternating ring which encloses part of the gamma chain. CF(1) is attached to CF(0) by a central stalk formed by the gamma and epsilon chains, while a peripheral stalk is formed by the delta and b chains.

The protein localises to the cell inner membrane. Key component of the proton channel; it plays a direct role in the translocation of protons across the membrane. This is ATP synthase subunit a from Syntrophobacter fumaroxidans (strain DSM 10017 / MPOB).